The chain runs to 563 residues: Arginine--tRNA ligase (563 aa).

Positions 120–130 (PNIAKPFHIGH) match the 'HIGH' region motif.

The protein belongs to the class-I aminoacyl-tRNA synthetase family. In terms of assembly, monomer.

The protein resides in the cytoplasm. The enzyme catalyses tRNA(Arg) + L-arginine + ATP = L-arginyl-tRNA(Arg) + AMP + diphosphate. The protein is Arginine--tRNA ligase of Clostridium botulinum (strain Langeland / NCTC 10281 / Type F).